Consider the following 243-residue polypeptide: Sugar fermentation stimulation protein homolog (243 aa).

This sequence belongs to the SfsA family.

The sequence is that of Sugar fermentation stimulation protein homolog from Bdellovibrio bacteriovorus (strain ATCC 15356 / DSM 50701 / NCIMB 9529 / HD100).